Reading from the N-terminus, the 410-residue chain is Adenosine receptor A2a (410 aa).

Residues 1-4 (MGSS) lie on the Extracellular side of the membrane. The helical transmembrane segment at 5-29 (VYIMVELAIAVLAILGNVLVCWAVW) threads the bilayer. The Cytoplasmic portion of the chain corresponds to 30 to 39 (INSNLQNVTN). A helical transmembrane segment spans residues 40-63 (FFVVSLAAADIAVGVLAIPFAITI). The Extracellular segment spans residues 64–74 (STGFCAACHGC). 3 disulfides stabilise this stretch: Cys68/Cys154, Cys71/Cys143, and Cys74/Cys161. A helical transmembrane segment spans residues 75–97 (LFFACFVLVLTQSSIFSLLAIAI). The Cytoplasmic segment spans residues 98–117 (DRYIAIRIPLRYNGLVTGMR). The chain crosses the membrane as a helical span at residues 118-140 (AKGIIAICWVLSFAIGLTPMLGW). Topologically, residues 141–168 (NNCSQKDENSTKTCGEGRVTCLFEDVVP) are extracellular. Residues Asn142 and Asn149 are each glycosylated (N-linked (GlcNAc...) asparagine). Glu164 serves as a coordination point for adenosine. Residues 169–193 (MNYMVYYNFFAFVLLPLLLMLAIYL) traverse the membrane as a helical segment. Residues 194–229 (RIFLAARRQLKQMESQPLPGERTRSTLQKEVHAAKS) lie on the Cytoplasmic side of the membrane. Residues 230-253 (LAIIVGLFALCWLPLHIINCFTFF) traverse the membrane as a helical segment. Residue Asn248 participates in adenosine binding. Cys254 and Cys257 are disulfide-bonded. The Extracellular portion of the chain corresponds to 254–261 (CSTCQHAP). Residues 262 to 285 (PWLMYLAIILSHSNSVVNPFIYAY) traverse the membrane as a helical segment. 2 residues coordinate adenosine: Ser272 and His273. Residues 286 to 410 (RIREFRQTFR…ASWSSEFAPS (125 aa)) lie on the Cytoplasmic side of the membrane. The interaction with GAS2L2 stretch occupies residues 322 to 410 (HSTEGEQVSL…ASWSSEFAPS (89 aa)). The interval 342–410 (ANGSAPHSGR…ASWSSEFAPS (69 aa)) is disordered. Basic and acidic residues predominate over residues 377-389 (TQEHQEGQEHPGL). Residues 401-410 (ASWSSEFAPS) show a composition bias toward polar residues.

It belongs to the G-protein coupled receptor 1 family. In terms of assembly, interacts (via cytoplasmic C-terminal domain) with USP4; the interaction is direct. May interact with DRD4. Interacts with NECAB2. Interacts (via cytoplasmic C-terminal domain) with GAS2L2; interaction enhances receptor-mediated adenylyl cyclase activity. In terms of processing, ubiquitinated. Deubiquitinated by USP4; leading to stabilization and expression at the cell surface.

Its subcellular location is the cell membrane. Receptor for adenosine. The activity of this receptor is mediated by G proteins which activate adenylyl cyclase. This chain is Adenosine receptor A2a (Adora2a), found in Mus musculus (Mouse).